A 512-amino-acid chain; its full sequence is Ribose import ATP-binding protein RbsA 2 (512 aa).

ABC transporter domains lie at 7–242 (LEIR…VGRE) and 257–498 (LGEP…SGIG). Residue 39 to 46 (GENGAGKS) participates in ATP binding.

It belongs to the ABC transporter superfamily. Ribose importer (TC 3.A.1.2.1) family. The complex is composed of an ATP-binding protein (RbsA), two transmembrane proteins (RbsC) and a solute-binding protein (RbsB).

It is found in the cell inner membrane. It carries out the reaction D-ribose(out) + ATP + H2O = D-ribose(in) + ADP + phosphate + H(+). Functionally, part of the ABC transporter complex RbsABC involved in ribose import. Responsible for energy coupling to the transport system. The sequence is that of Ribose import ATP-binding protein RbsA 2 from Rhizobium meliloti (strain 1021) (Ensifer meliloti).